We begin with the raw amino-acid sequence, 929 residues long: SED5-binding protein 3 (929 aa).

Serine 15 carries the post-translational modification Phosphoserine. A compositionally biased stretch (polar residues) spans 18 to 28 (ESTVHTGGASS). The disordered stretch occupies residues 18–52 (ESTVHTGGASSKKSRRPHRAYHNFSSGTVPTLGNS). Residues 29–38 (KKSRRPHRAY) show a composition bias toward basic residues. Positions 40 to 52 (NFSSGTVPTLGNS) are enriched in polar residues. The residue at position 72 (threonine 72) is a Phosphothreonine. Phosphoserine is present on residues serine 83, serine 85, serine 94, serine 101, and serine 110. At threonine 216 the chain carries Phosphothreonine. Positions 220 to 244 (CRRCRAYANPKFQFTYDSSVICNIC) are zinc finger-like.

It belongs to the SEC23/SEC24 family. SEC24 subfamily. As to quaternary structure, COPII is composed of at least five proteins: the SEC23/24 complex, the SEC13/31 complex and SAR1. Binds to SED5. Interacts with GHR1.

Its subcellular location is the cytoplasm. The protein resides in the golgi apparatus membrane. The protein localises to the endoplasmic reticulum membrane. Functionally, component of the COPII coat, that covers ER-derived vesicles involved in transport from the endoplasmic reticulum to the Golgi apparatus. COPII acts in the cytoplasm to promote the transport of secretory, plasma membrane, and vacuolar proteins from the endoplasmic reticulum to the Golgi complex. This is SED5-binding protein 3 (SFB3) from Saccharomyces cerevisiae (strain ATCC 204508 / S288c) (Baker's yeast).